A 321-amino-acid chain; its full sequence is Acetyl-coenzyme A carboxylase carboxyl transferase subunit alpha (321 aa).

Residues 32 to 293 (DISEEIARLQ…KRVLQDQLKE (262 aa)) enclose the CoA carboxyltransferase C-terminal domain.

The protein belongs to the AccA family. Acetyl-CoA carboxylase is a heterohexamer composed of biotin carboxyl carrier protein (AccB), biotin carboxylase (AccC) and two subunits each of ACCase subunit alpha (AccA) and ACCase subunit beta (AccD).

It is found in the cytoplasm. The enzyme catalyses N(6)-carboxybiotinyl-L-lysyl-[protein] + acetyl-CoA = N(6)-biotinyl-L-lysyl-[protein] + malonyl-CoA. Its pathway is lipid metabolism; malonyl-CoA biosynthesis; malonyl-CoA from acetyl-CoA: step 1/1. Its function is as follows. Component of the acetyl coenzyme A carboxylase (ACC) complex. First, biotin carboxylase catalyzes the carboxylation of biotin on its carrier protein (BCCP) and then the CO(2) group is transferred by the carboxyltransferase to acetyl-CoA to form malonyl-CoA. This is Acetyl-coenzyme A carboxylase carboxyl transferase subunit alpha from Chromobacterium violaceum (strain ATCC 12472 / DSM 30191 / JCM 1249 / CCUG 213 / NBRC 12614 / NCIMB 9131 / NCTC 9757 / MK).